Reading from the N-terminus, the 196-residue chain is UMP-CMP kinase (196 aa).

An ATP-binding site is contributed by Gly-13 to Thr-18. Residue Ser-33 is modified to Phosphoserine. Residues Ser-33–Val-63 are NMP. An a ribonucleoside 5'-phosphate-binding site is contributed by Arg-39. An N6-acetyllysine mark is found at Lys-43 and Lys-55. Residues Lys-61–Val-63 and Gly-93–Arg-96 each bind a ribonucleoside 5'-phosphate. Asn-100 is a CMP binding site. At Lys-106 the chain carries N6-succinyllysine. The interval Glu-133–Asp-143 is LID. Arg-134 contacts ATP. 2 residues coordinate a ribonucleoside 5'-phosphate: Arg-140 and Arg-151. Position 179 (Lys-179) interacts with ATP. Position 180 is a phosphoserine (Ser-180).

This sequence belongs to the adenylate kinase family. UMP-CMP kinase subfamily. Monomer. It depends on Mg(2+) as a cofactor.

It is found in the nucleus. The protein resides in the cytoplasm. It carries out the reaction CMP + ATP = CDP + ADP. The enzyme catalyses dCMP + ATP = dCDP + ADP. The catalysed reaction is UMP + ATP = UDP + ADP. It catalyses the reaction a 2'-deoxyribonucleoside 5'-diphosphate + ATP = a 2'-deoxyribonucleoside 5'-triphosphate + ADP. It carries out the reaction a ribonucleoside 5'-diphosphate + ATP = a ribonucleoside 5'-triphosphate + ADP. Functionally, catalyzes the phosphorylation of pyrimidine nucleoside monophosphates at the expense of ATP. Plays an important role in de novo pyrimidine nucleotide biosynthesis. Has preference for UMP and CMP as phosphate acceptors. Also displays broad nucleoside diphosphate kinase activity. The polypeptide is UMP-CMP kinase (Bos taurus (Bovine)).